The sequence spans 645 residues: DNA ligase (645 aa).

Residues 30–34 (DAEFD) and 72–73 (SQ) each bind NAD(+). The active-site N6-AMP-lysine intermediate is the K99. Positions 120, 163, 275, and 296 each coordinate NAD(+). 4 residues coordinate Zn(2+): C387, C390, C403, and C408. Residues 564 to 645 (EEGAVLKGLS…EAFLNLIGKV (82 aa)) form the BRCT domain.

The protein belongs to the NAD-dependent DNA ligase family. LigA subfamily. It depends on Mg(2+) as a cofactor. The cofactor is Mn(2+).

It catalyses the reaction NAD(+) + (deoxyribonucleotide)n-3'-hydroxyl + 5'-phospho-(deoxyribonucleotide)m = (deoxyribonucleotide)n+m + AMP + beta-nicotinamide D-nucleotide.. Functionally, DNA ligase that catalyzes the formation of phosphodiester linkages between 5'-phosphoryl and 3'-hydroxyl groups in double-stranded DNA using NAD as a coenzyme and as the energy source for the reaction. It is essential for DNA replication and repair of damaged DNA. The protein is DNA ligase of Treponema denticola (strain ATCC 35405 / DSM 14222 / CIP 103919 / JCM 8153 / KCTC 15104).